Consider the following 202-residue polypeptide: Translation initiation factor IF-3 (202 aa).

Positions threonine 178–asparagine 202 are disordered. Residues leucine 185 to lysine 196 show a composition bias toward basic and acidic residues.

This sequence belongs to the IF-3 family. Monomer.

It localises to the cytoplasm. Functionally, IF-3 binds to the 30S ribosomal subunit and shifts the equilibrium between 70S ribosomes and their 50S and 30S subunits in favor of the free subunits, thus enhancing the availability of 30S subunits on which protein synthesis initiation begins. This Prochlorococcus marinus (strain NATL1A) protein is Translation initiation factor IF-3.